The chain runs to 318 residues: tRNA uridine(34) hydroxylase (318 aa).

Residues Glu-123–Glu-217 form the Rhodanese domain. The active-site Cysteine persulfide intermediate is Cys-177.

Belongs to the TrhO family.

It catalyses the reaction uridine(34) in tRNA + AH2 + O2 = 5-hydroxyuridine(34) in tRNA + A + H2O. In terms of biological role, catalyzes oxygen-dependent 5-hydroxyuridine (ho5U) modification at position 34 in tRNAs. The protein is tRNA uridine(34) hydroxylase of Staphylococcus aureus (strain COL).